A 617-amino-acid chain; its full sequence is Isopropyl malate synthase gloH (617 aa).

The 279-residue stretch at Pro47–Leu325 folds into the Pyruvate carboxyltransferase domain.

It belongs to the alpha-IPM synthase/homocitrate synthase family. LeuA type 2 subfamily.

The enzyme catalyses 3-methyl-2-oxobutanoate + acetyl-CoA + H2O = (2S)-2-isopropylmalate + CoA + H(+). It functions in the pathway mycotoxin biosynthesis. Its function is as follows. 2-isopropylmalate synthase; part of the gene cluster that mediates the biosynthesis of pneumocandins, lipohexapeptides of the echinocandin family that prevent fungal cell wall formation by non-competitive inhibition of beta-1,3-glucan synthase. The 10,12-dimethylmyristoyl side chain is synthesized by the reducing polyketide synthase gloL/GLPKS4. The thioesterase gloN/GLHYD exclusively interacts with gloL/GLPKS4 to maintain turnover of the polyketide side chain. The 10R,12S-dimethylmyristic acid is then transferred to the first thiolation domain of the nonribosomal peptide synthetase gloA/GLNRPS4 by the acyl-AMP ligase gloD/GLligase, followed by its acylation to L-ornithine to trigger elongation of the cyclic hexapeptide. L-ornithine, 4R-hydroxyl-L-proline (generated from L-proline by the dioxygenase gloF/GLOXY2), 3S-hydroxyl-L-homotyrosine (generated by gloG/GLHtyB, gloH/GLHtyA, gloI/GLHtyC, gloJ/GLHtyD and hydroxylated at C-3 by the dioxygenase gloM/GLOXY1), 3R-hydroxyl-L-glutamine (generated from L-glutamine probably by the dioxygenase gloE/GLOXY3) and 3S-hydroxyl-L-proline (generated from L-proline by the dioxygenase gloF/GLOXY2 to yield pneumocandin B0), or 3S-hydroxyl-4S-methyl-L-proline (generated from L-leucine by the dioxygenase gloC/GLOXY4 to yield pneumocandin A0) are sequentially added to the growing chain. The last C domain of gloA/GLNRPS4 is proposed to be responsible for cyclization by condensation to form the peptide bond between L-ornithine and 3S-hydroxyl-4S-methyl-L-proline (for pneumocandin A0) or 3S-hydroxyl-L-proline (for pneumocandin B0). Finally, the subsequent C-4 hydroxylation of 3S-hydroxyl-L-homotyrosine and L-ornithine dihydroxylation at C-4 and C-5 are performed by the cytochrome P450 monooxygenases gloP/GLP450-1 and gloO/GLP450-2, respectively. The chain is Isopropyl malate synthase gloH from Glarea lozoyensis (strain ATCC 20868 / MF5171).